A 179-amino-acid chain; its full sequence is Inosine/xanthosine triphosphatase (179 aa).

A Mg(2+)-binding site is contributed by E71. Substrate is bound at residue 71–72 (EA).

Belongs to the YjjX NTPase family. Homodimer. Mg(2+) is required as a cofactor. Requires Mn(2+) as cofactor.

It catalyses the reaction XTP + H2O = XDP + phosphate + H(+). It carries out the reaction ITP + H2O = IDP + phosphate + H(+). Its function is as follows. Phosphatase that hydrolyzes non-canonical purine nucleotides such as XTP and ITP to their respective diphosphate derivatives. Probably excludes non-canonical purines from DNA/RNA precursor pool, thus preventing their incorporation into DNA/RNA and avoiding chromosomal lesions. The polypeptide is Inosine/xanthosine triphosphatase (Shewanella sp. (strain MR-7)).